The primary structure comprises 217 residues: Small ribosomal subunit protein eS6 (217 aa).

Belongs to the eukaryotic ribosomal protein eS6 family. Post-translationally, phosphorylated.

The sequence is that of Small ribosomal subunit protein eS6 (RPS6) from Encephalitozoon cuniculi (strain GB-M1) (Microsporidian parasite).